We begin with the raw amino-acid sequence, 122 residues long: Large ribosomal subunit protein uL14 (122 aa).

It belongs to the universal ribosomal protein uL14 family. As to quaternary structure, part of the 50S ribosomal subunit. Forms a cluster with proteins L3 and L19. In the 70S ribosome, L14 and L19 interact and together make contacts with the 16S rRNA in bridges B5 and B8.

Binds to 23S rRNA. Forms part of two intersubunit bridges in the 70S ribosome. The polypeptide is Large ribosomal subunit protein uL14 (Buchnera aphidicola subsp. Schizaphis graminum (strain Sg)).